Here is a 433-residue protein sequence, read N- to C-terminus: Serine hydroxymethyltransferase (433 aa).

(6S)-5,6,7,8-tetrahydrofolate contacts are provided by residues Leu-132 and 136-138 (GHL). Lys-241 carries the N6-(pyridoxal phosphate)lysine modification.

Belongs to the SHMT family. Homodimer. The cofactor is pyridoxal 5'-phosphate.

It localises to the cytoplasm. It carries out the reaction (6R)-5,10-methylene-5,6,7,8-tetrahydrofolate + glycine + H2O = (6S)-5,6,7,8-tetrahydrofolate + L-serine. It functions in the pathway one-carbon metabolism; tetrahydrofolate interconversion. Its pathway is amino-acid biosynthesis; glycine biosynthesis; glycine from L-serine: step 1/1. Its function is as follows. Catalyzes the reversible interconversion of serine and glycine with tetrahydrofolate (THF) serving as the one-carbon carrier. This reaction serves as the major source of one-carbon groups required for the biosynthesis of purines, thymidylate, methionine, and other important biomolecules. Also exhibits THF-independent aldolase activity toward beta-hydroxyamino acids, producing glycine and aldehydes, via a retro-aldol mechanism. The chain is Serine hydroxymethyltransferase from Rhodopseudomonas palustris (strain HaA2).